Reading from the N-terminus, the 442-residue chain is Protein IQ-DOMAIN 33 (442 aa).

Residues glutamate 159–lysine 188 form the IQ domain. Residues glutamate 184–glycine 212 are disordered. The segment covering aspartate 199–glycine 212 has biased composition (polar residues). The calmodulin-binding stretch occupies residues arginine 270 to leucine 282. Residues glutamate 375–threonine 442 are disordered. Residues isoleucine 383–glutamine 402 show a composition bias toward basic residues. The short motif at lysine 385–tyrosine 392 is the Nuclear localization signal element.

This sequence belongs to the IQD family. As to quaternary structure, binds to multiple calmodulin (CaM) in the presence of Ca(2+) and CaM-like proteins.

Its subcellular location is the nucleus. In terms of biological role, may be involved in cooperative interactions with calmodulins or calmodulin-like proteins. Recruits calmodulin proteins to microtubules, thus being a potential scaffold in cellular signaling and trafficking. May associate with nucleic acids and regulate gene expression at the transcriptional or post-transcriptional level. In Arabidopsis thaliana (Mouse-ear cress), this protein is Protein IQ-DOMAIN 33.